Here is a 445-residue protein sequence, read N- to C-terminus: Phosphoglucosamine mutase (445 aa).

Catalysis depends on Ser-102, which acts as the Phosphoserine intermediate. Mg(2+)-binding residues include Ser-102, Asp-241, Asp-243, and Asp-245. Ser-102 bears the Phosphoserine mark.

Belongs to the phosphohexose mutase family. The cofactor is Mg(2+). In terms of processing, activated by phosphorylation.

The enzyme catalyses alpha-D-glucosamine 1-phosphate = D-glucosamine 6-phosphate. In terms of biological role, catalyzes the conversion of glucosamine-6-phosphate to glucosamine-1-phosphate. The chain is Phosphoglucosamine mutase from Shewanella oneidensis (strain ATCC 700550 / JCM 31522 / CIP 106686 / LMG 19005 / NCIMB 14063 / MR-1).